Here is a 175-residue protein sequence, read N- to C-terminus: Cytochrome c homolog (175 aa).

Residues 1-8 are Cytoplasmic-facing; sequence MSGKELNK. Residues 9–29 traverse the membrane as a helical; Signal-anchor segment; sequence IVAAILFASLIAMMVGFVANI. At 30–175 the chain is on the periplasmic side; sequence LYKPTLELQH…LFLKTYVHDK (146 aa). Heme c is bound by residues Cys84, Cys87, His88, and Met150.

It belongs to the cytochrome c family. Binds 1 heme c group covalently per subunit.

It is found in the cell membrane. Functionally, may be involved in electron transfer from bc1 complex to aa3. This Rickettsia felis (strain ATCC VR-1525 / URRWXCal2) (Rickettsia azadi) protein is Cytochrome c homolog (cycM).